Consider the following 638-residue polypeptide: Leucine-rich repeat-containing protein 63 (638 aa).

Disordered regions lie at residues 220–241 (VPST…PSAA) and 306–325 (TTAA…TVQR). LRR repeat units follow at residues 389–412 (AFQL…ILYL), 413–435 (QNLQ…IHLL), 437–458 (YLRI…LFCL), 460–481 (YLEE…IQKL), 482–504 (RSLE…ILKL), and 532–556 (LTQI…VRKS).

In Mus musculus (Mouse), this protein is Leucine-rich repeat-containing protein 63.